We begin with the raw amino-acid sequence, 309 residues long: Ferrochelatase (309 aa).

2 residues coordinate Fe cation: His-185 and Glu-262.

This sequence belongs to the ferrochelatase family.

The protein resides in the cytoplasm. It carries out the reaction heme b + 2 H(+) = protoporphyrin IX + Fe(2+). The protein operates within porphyrin-containing compound metabolism; protoheme biosynthesis; protoheme from protoporphyrin-IX: step 1/1. Catalyzes the ferrous insertion into protoporphyrin IX. In Campylobacter jejuni subsp. jejuni serotype O:23/36 (strain 81-176), this protein is Ferrochelatase.